We begin with the raw amino-acid sequence, 445 residues long: Probable phosphoglucosamine mutase (445 aa).

Residue Ser99 is the Phosphoserine intermediate of the active site. Residues Ser99, Asp238, Asp240, and Asp242 each contribute to the Mg(2+) site. Ser99 carries the phosphoserine modification.

This sequence belongs to the phosphohexose mutase family. The cofactor is Mg(2+). Post-translationally, activated by phosphorylation.

It catalyses the reaction alpha-D-glucosamine 1-phosphate = D-glucosamine 6-phosphate. Catalyzes the conversion of glucosamine-6-phosphate to glucosamine-1-phosphate. This Methanobrevibacter smithii (strain ATCC 35061 / DSM 861 / OCM 144 / PS) protein is Probable phosphoglucosamine mutase.